The sequence spans 474 residues: Proline--tRNA ligase (474 aa).

Belongs to the class-II aminoacyl-tRNA synthetase family. ProS type 3 subfamily. Homodimer.

Its subcellular location is the cytoplasm. It catalyses the reaction tRNA(Pro) + L-proline + ATP = L-prolyl-tRNA(Pro) + AMP + diphosphate. Functionally, catalyzes the attachment of proline to tRNA(Pro) in a two-step reaction: proline is first activated by ATP to form Pro-AMP and then transferred to the acceptor end of tRNA(Pro). The sequence is that of Proline--tRNA ligase from Mycoplasma capricolum subsp. capricolum (strain California kid / ATCC 27343 / NCTC 10154).